A 154-amino-acid chain; its full sequence is Myoglobin (154 aa).

Positions 2–148 (GLSDGEWQLV…FRNDMAAKYK (147 aa)) constitute a Globin domain. S4 carries the phosphoserine modification. H65 contributes to the nitrite binding site. H65 is a binding site for O2. T68 is modified (phosphothreonine). H94 serves as a coordination point for heme b.

It belongs to the globin family. Monomeric.

The protein localises to the cytoplasm. Its subcellular location is the sarcoplasm. The catalysed reaction is Fe(III)-heme b-[protein] + nitric oxide + H2O = Fe(II)-heme b-[protein] + nitrite + 2 H(+). It carries out the reaction H2O2 + AH2 = A + 2 H2O. Its function is as follows. Monomeric heme protein which primary function is to store oxygen and facilitate its diffusion within muscle tissues. Reversibly binds oxygen through a pentacoordinated heme iron and enables its timely and efficient release as needed during periods of heightened demand. Depending on the oxidative conditions of tissues and cells, and in addition to its ability to bind oxygen, it also has a nitrite reductase activity whereby it regulates the production of bioactive nitric oxide. Under stress conditions, like hypoxia and anoxia, it also protects cells against reactive oxygen species thanks to its pseudoperoxidase activity. The sequence is that of Myoglobin (MB) from Ochotona curzoniae (Black-lipped pika).